The following is a 955-amino-acid chain: Sex determination protein fruitless (955 aa).

Disordered stretches follow at residues 1–55 (MMAT…HAHS) and 70–89 (IETD…LPLP). Residues 35-55 (PHGHGHLHSHAHAHGHGHAHS) show a composition bias toward basic residues. A compositionally biased stretch (pro residues) spans 76–89 (APPPPLPPPPLPLP). The BTB domain maps to 131-196 (CDVTLACEGE…MYKGEVNVGQ (66 aa)). Disordered regions lie at residues 229 to 288 (LRDS…SMSE), 352 to 526 (NRSA…LGGG), and 784 to 814 (ANHQ…SGAG). A compositionally biased stretch (polar residues) spans 233–246 (AASSPTGRGPSNYT). 2 stretches are compositionally biased toward basic and acidic residues: residues 258–279 (AMRE…DELT) and 360–379 (CSDR…RDDL). A compositionally biased stretch (low complexity) spans 387 to 420 (KDNNNSNSSSTGGNNNNNNNNNNNSSSNNNNSSS). The span at 421 to 446 (NRERNNSGERERERERERERDRDREL) shows a compositional bias: basic and acidic residues. Composition is skewed to low complexity over residues 464 to 475 (SSSNCDNSLSSS) and 790 to 814 (QHPP…SGAG). The C2H2-type zinc finger occupies 918–941 (HECPVCGQKFTRRDNMKAHCKIKH).

As to expression, expressed in parts of the adult male brain associated with the courtship song and steps of the male courtship. Also expressed in the larval and pupal male mushroom body and optic lobe. Expressed in pupal female optic lobe.

The protein resides in the nucleus. Its function is as follows. Probably acts as a transcriptional regulator. Part of the somatic sex determination hierarchy; sex determination genes transformer (tra) and transformer-2 (tra-2) switch fru splicing from the male-specific pattern to the female-specific pattern through activation of the female-specific fru 5'-splice site. Vital for the development of males and females. Controls the development of the male specific abdominal muscle of Lawrence. Plays a role in male courtship behavior and sexual orientation. Enhances male-specific expression of takeout in brain-associated fat body. This Drosophila melanogaster (Fruit fly) protein is Sex determination protein fruitless (fru).